We begin with the raw amino-acid sequence, 106 residues long: Pyrimidine/purine nucleoside phosphorylase (106 aa).

The protein belongs to the nucleoside phosphorylase PpnP family.

The enzyme catalyses a purine D-ribonucleoside + phosphate = a purine nucleobase + alpha-D-ribose 1-phosphate. It carries out the reaction adenosine + phosphate = alpha-D-ribose 1-phosphate + adenine. It catalyses the reaction cytidine + phosphate = cytosine + alpha-D-ribose 1-phosphate. The catalysed reaction is guanosine + phosphate = alpha-D-ribose 1-phosphate + guanine. The enzyme catalyses inosine + phosphate = alpha-D-ribose 1-phosphate + hypoxanthine. It carries out the reaction thymidine + phosphate = 2-deoxy-alpha-D-ribose 1-phosphate + thymine. It catalyses the reaction uridine + phosphate = alpha-D-ribose 1-phosphate + uracil. The catalysed reaction is xanthosine + phosphate = alpha-D-ribose 1-phosphate + xanthine. Catalyzes the phosphorolysis of diverse nucleosides, yielding D-ribose 1-phosphate and the respective free bases. Can use uridine, adenosine, guanosine, cytidine, thymidine, inosine and xanthosine as substrates. Also catalyzes the reverse reactions. This chain is Pyrimidine/purine nucleoside phosphorylase, found in Burkholderia vietnamiensis (strain G4 / LMG 22486) (Burkholderia cepacia (strain R1808)).